A 559-amino-acid polypeptide reads, in one-letter code: GTP diphosphokinase CRSH2, chloroplastic (559 aa).

The transit peptide at 1-37 directs the protein to the chloroplast; the sequence is MASAGGEVVVVDPAAAAVAPDVEHHAPAPRLTPAGSG. The HD domain occupies 87 to 187; that stretch reads SLARALIVAA…LELAIRLDAM (101 aa). EF-hand domains lie at 449-484 and 486-518; these read ASAG…LGAG and KDAE…VELK. Aspartate 462, asparagine 464, aspartate 466, arginine 468, glutamate 473, aspartate 496, asparagine 498, aspartate 500, serine 502, and glutamate 507 together coordinate Ca(2+).

It belongs to the RelA/SpoT family. As to expression, expressed in shoots.

It is found in the plastid. It localises to the chloroplast. The enzyme catalyses GTP + ATP = guanosine 3'-diphosphate 5'-triphosphate + AMP. Its activity is regulated as follows. Activated by calcium. Functionally, possesses calcium-dependent ppGpp (guanosine 3'-diphosphate 5'-diphosphate) synthetase activity in vitro and is able to functionally complement E.coli relA mutants. May be involved in a rapid plant ppGpp-mediated response to pathogens and other stresses. This chain is GTP diphosphokinase CRSH2, chloroplastic, found in Oryza sativa subsp. japonica (Rice).